The sequence spans 595 residues: Glutamyl-tRNA(Gln) amidotransferase subunit B, mitochondrial (595 aa).

The transit peptide at 1–72 (MPRLWYSRYL…RAKSQSRNGR (72 aa)) directs the protein to the mitochondrion.

The protein belongs to the GatB/GatE family. GatB subfamily. Subunit of the heterotrimeric GatCAB amidotransferase (AdT) complex, composed of A, B and C subunits.

The protein localises to the mitochondrion. It carries out the reaction L-glutamyl-tRNA(Gln) + L-glutamine + ATP + H2O = L-glutaminyl-tRNA(Gln) + L-glutamate + ADP + phosphate + H(+). Allows the formation of correctly charged Gln-tRNA(Gln) through the transamidation of misacylated Glu-tRNA(Gln) in the mitochondria. The reaction takes place in the presence of glutamine and ATP through an activated gamma-phospho-Glu-tRNA(Gln). The sequence is that of Glutamyl-tRNA(Gln) amidotransferase subunit B, mitochondrial from Talaromyces marneffei (strain ATCC 18224 / CBS 334.59 / QM 7333) (Penicillium marneffei).